The following is a 287-amino-acid chain: Coatomer subunit epsilon-1 (287 aa).

Belongs to the COPE family. As to quaternary structure, oligomeric complex that consists of at least the alpha, beta, beta', gamma, delta, epsilon and zeta subunits.

It is found in the cytoplasm. It localises to the golgi apparatus membrane. The protein localises to the cytoplasmic vesicle. Its subcellular location is the COPI-coated vesicle membrane. In terms of biological role, the coatomer is a cytosolic protein complex that binds to dilysine motifs and reversibly associates with Golgi non-clathrin-coated vesicles, which further mediate biosynthetic protein transport from the ER, via the Golgi up to the trans Golgi network. The coatomer complex is required for budding from Golgi membranes, and is essential for the retrograde Golgi-to-ER transport of dilysine-tagged proteins. This chain is Coatomer subunit epsilon-1 (COPE1), found in Oryza sativa subsp. japonica (Rice).